We begin with the raw amino-acid sequence, 575 residues long: Urease subunit alpha (575 aa).

Residues 137–575 (GGIDCHIHFI…LPMTQRYFLF (439 aa)) enclose the Urease domain. Residues His-142, His-144, and Lys-225 each coordinate Ni(2+). Residue Lys-225 is modified to N6-carboxylysine. Residue His-227 participates in substrate binding. Ni(2+) contacts are provided by His-254 and His-280. His-328 acts as the Proton donor in catalysis. Position 368 (Asp-368) interacts with Ni(2+).

Belongs to the metallo-dependent hydrolases superfamily. Urease alpha subunit family. In terms of assembly, heterotrimer of UreA (gamma), UreB (beta) and UreC (alpha) subunits. Three heterotrimers associate to form the active enzyme. Requires Ni cation as cofactor. Post-translationally, carboxylation allows a single lysine to coordinate two nickel ions.

The protein resides in the cytoplasm. The catalysed reaction is urea + 2 H2O + H(+) = hydrogencarbonate + 2 NH4(+). The protein operates within nitrogen metabolism; urea degradation; CO(2) and NH(3) from urea (urease route): step 1/1. This is Urease subunit alpha from Methylibium petroleiphilum (strain ATCC BAA-1232 / LMG 22953 / PM1).